We begin with the raw amino-acid sequence, 79 residues long: Conotoxin Vi6.9 (79 aa).

The N-terminal stretch at 1–22 (MKLTCMVIITVLFLTASQLITA) is a signal peptide. A propeptide spanning residues 23-47 (DYSRDQRQYRAVRLGDEMRNFKGAR) is cleaved from the precursor. 3 cysteine pairs are disulfide-bonded: C49/C62, C56/C67, and C61/C77. A 4-hydroxyproline mark is found at P60 and P63.

It belongs to the conotoxin O1 superfamily. As to expression, expressed by the venom duct.

It localises to the secreted. In terms of biological role, ion channel inhibitor that inhibits the increase in intracellular calcium upon depolarization in DRG neurons. In vivo, both intraperitoneal and intracranial injections into mice induce hyperactivity. The sequence is that of Conotoxin Vi6.9 from Conus virgo (Virgin cone).